Consider the following 490-residue polypeptide: MVPVVALVGRPNVGKSTLFNRLTRTRDALVADFPGLTRDRKYGRAEVEGREFICIDTGGIDGTEDGVETRMAEQSLLAIEEADVVLFMVDARAGLMPADEAIAKHLRSREKPTFLVANKTDGLDPDQAVVDFYSLGLGEIYPIAASHGRGVLSLLEHVLLPWMDDVAPQEEVDEDAEYWAQFEAEQNGEEAPEDDFDPQSLPIKLAIVGRPNVGKSTLTNRILGEERVVVYDMPGTTRDSIYIPMERDEREYVLIDTAGVRKRGKITDAVEKFSVIKTLQAIEDANVVLLVIDAREGISDQDLSLLGFILNSGRSLVIVVNKWDGLSQEVKEQVKETLDFRLGFIDFARVHFISALHGSGVGNLFESVREAYDSSTRRVSTAMLTRIMTMAVEDHQPPLVRGRRVKLKYAHAGGYNPPIVVIHGNQVKDLPDSYKRYLMNYFRKSLEVMGTPIRIQFKEGENPYANKRNTLTPTQMRKRKRLMKHIKKSK.

EngA-type G domains lie at 3–166 and 203–376; these read PVVA…MDDV and IKLA…DSST. GTP is bound by residues 9–16, 56–60, 118–121, 209–216, 256–260, and 321–324; these read GRPNVGKS, DTGGI, NKTD, DTAGV, and NKWD. One can recognise a KH-like domain in the interval 377 to 461; it reads RRVSTAMLTR…PIRIQFKEGE (85 aa).

The protein belongs to the TRAFAC class TrmE-Era-EngA-EngB-Septin-like GTPase superfamily. EngA (Der) GTPase family. In terms of assembly, associates with the 50S ribosomal subunit.

Functionally, GTPase that plays an essential role in the late steps of ribosome biogenesis. The protein is GTPase Der of Salmonella newport (strain SL254).